Here is a 54-residue protein sequence, read N- to C-terminus: UPF0391 membrane protein RC1_1636 (54 aa).

The next 2 helical transmembrane spans lie at 3–23 (YWAL…FGGI) and 30–50 (IAQI…IMGL).

This sequence belongs to the UPF0391 family.

It is found in the cell membrane. This chain is UPF0391 membrane protein RC1_1636, found in Rhodospirillum centenum (strain ATCC 51521 / SW).